A 228-amino-acid chain; its full sequence is Orotate phosphoribosyltransferase (228 aa).

Lys-26 lines the 5-phospho-alpha-D-ribose 1-diphosphate pocket. Residue 34–35 (FF) participates in orotate binding. 5-phospho-alpha-D-ribose 1-diphosphate contacts are provided by residues 72-73 (YK), Arg-98, Lys-99, Lys-102, His-104, and 123-131 (DDVISAGTS). Orotate-binding residues include Ser-127 and Arg-155.

The protein belongs to the purine/pyrimidine phosphoribosyltransferase family. PyrE subfamily. As to quaternary structure, homodimer. Requires Mg(2+) as cofactor.

It carries out the reaction orotidine 5'-phosphate + diphosphate = orotate + 5-phospho-alpha-D-ribose 1-diphosphate. The protein operates within pyrimidine metabolism; UMP biosynthesis via de novo pathway; UMP from orotate: step 1/2. In terms of biological role, catalyzes the transfer of a ribosyl phosphate group from 5-phosphoribose 1-diphosphate to orotate, leading to the formation of orotidine monophosphate (OMP). The sequence is that of Orotate phosphoribosyltransferase from Nitrosospira multiformis (strain ATCC 25196 / NCIMB 11849 / C 71).